A 1203-amino-acid chain; its full sequence is DNA-directed RNA polymerase subunit beta' (1203 aa).

Positions 60, 62, 75, and 78 each coordinate Zn(2+). The Mg(2+) site is built by D449, D451, and D453. Residues C818, C892, C899, and C902 each contribute to the Zn(2+) site.

This sequence belongs to the RNA polymerase beta' chain family. As to quaternary structure, the RNAP catalytic core consists of 2 alpha, 1 beta, 1 beta' and 1 omega subunit. When a sigma factor is associated with the core the holoenzyme is formed, which can initiate transcription. The cofactor is Mg(2+). It depends on Zn(2+) as a cofactor.

It catalyses the reaction RNA(n) + a ribonucleoside 5'-triphosphate = RNA(n+1) + diphosphate. In terms of biological role, DNA-dependent RNA polymerase catalyzes the transcription of DNA into RNA using the four ribonucleoside triphosphates as substrates. This chain is DNA-directed RNA polymerase subunit beta', found in Bacillus anthracis.